A 560-amino-acid chain; its full sequence is Serine/threonine-protein kinase TOS3 (560 aa).

The 295-residue stretch at 50–344 (FEILATLGNG…LADIKVHPFM (295 aa)) folds into the Protein kinase domain. ATP contacts are provided by residues 56–64 (LGNGQYGKV) and lysine 79. Residue aspartate 189 is the Proton acceptor of the active site.

This sequence belongs to the protein kinase superfamily. Ser/Thr protein kinase family. In terms of processing, autophosphorylated.

The enzyme catalyses L-seryl-[protein] + ATP = O-phospho-L-seryl-[protein] + ADP + H(+). The catalysed reaction is L-threonyl-[protein] + ATP = O-phospho-L-threonyl-[protein] + ADP + H(+). Functionally, one of the three SNF1 protein kinases (with SAK1 and ELM1) which are required for growth on nonfermentable carbon sources and nonpreferred sugars and for response to environmental stress. Activates SNF1 by phosphorylation of its activation-loop 'Thr-210'. Required for the regulation by SNF1 of the transcription of a large set of genes, the modification the activity of metabolic enzymes, and the control of various nutrient-responsive cellular developmental processes. Also phosphorylates GAL83, MIG1 and SIP2. This chain is Serine/threonine-protein kinase TOS3 (TOS3), found in Saccharomyces cerevisiae (strain ATCC 204508 / S288c) (Baker's yeast).